Reading from the N-terminus, the 177-residue chain is MAIVQDKYAQSLFEVAQAQGVHESVRQDLVEIKEGLAGNKAFFAFAEDPKVSSEKRHAFVEATFSGVDKPLRNLLSILADKKQLALLPSIADYYTEHYNKFNNQQYMKVESVYALSSEELDEIGKAFIKRTGYKKLLIENVVNSTLIGGIRATIGTTVYDGSVANELTQLEKSFHKQ.

The protein belongs to the ATPase delta chain family. In terms of assembly, F-type ATPases have 2 components, F(1) - the catalytic core - and F(0) - the membrane proton channel. F(1) has five subunits: alpha(3), beta(3), gamma(1), delta(1), epsilon(1). F(0) has three main subunits: a(1), b(2) and c(10-14). The alpha and beta chains form an alternating ring which encloses part of the gamma chain. F(1) is attached to F(0) by a central stalk formed by the gamma and epsilon chains, while a peripheral stalk is formed by the delta and b chains.

The protein localises to the cell membrane. Its function is as follows. F(1)F(0) ATP synthase produces ATP from ADP in the presence of a proton or sodium gradient. F-type ATPases consist of two structural domains, F(1) containing the extramembraneous catalytic core and F(0) containing the membrane proton channel, linked together by a central stalk and a peripheral stalk. During catalysis, ATP synthesis in the catalytic domain of F(1) is coupled via a rotary mechanism of the central stalk subunits to proton translocation. This protein is part of the stalk that links CF(0) to CF(1). It either transmits conformational changes from CF(0) to CF(1) or is implicated in proton conduction. This Macrococcus caseolyticus (strain JCSC5402) (Macrococcoides caseolyticum) protein is ATP synthase subunit delta.